We begin with the raw amino-acid sequence, 506 residues long: Cobyric acid synthase (506 aa).

Residues 251–448 (DITIAIVQLP…LHGLFDSDAF (198 aa)) form the GATase cobBQ-type domain. The active-site Nucleophile is C332. Residue H440 is part of the active site.

This sequence belongs to the CobB/CobQ family. CobQ subfamily.

Its pathway is cofactor biosynthesis; adenosylcobalamin biosynthesis. Functionally, catalyzes amidations at positions B, D, E, and G on adenosylcobyrinic A,C-diamide. NH(2) groups are provided by glutamine, and one molecule of ATP is hydrogenolyzed for each amidation. The polypeptide is Cobyric acid synthase (Salmonella dublin (strain CT_02021853)).